A 302-amino-acid polypeptide reads, in one-letter code: Nucleotide-binding protein Strop_3101 (302 aa).

26–33 lines the ATP pocket; sequence GVSGGGRS. 77-80 serves as a coordination point for GTP; sequence DVRS.

The protein belongs to the RapZ-like family.

Displays ATPase and GTPase activities. The sequence is that of Nucleotide-binding protein Strop_3101 from Salinispora tropica (strain ATCC BAA-916 / DSM 44818 / JCM 13857 / NBRC 105044 / CNB-440).